The sequence spans 714 residues: GATA zinc finger domain-containing protein 10 (714 aa).

Disordered stretches follow at residues 28-97 (YIQQ…NKQI), 115-180 (TMPH…QQQQ), 266-362 (MPMN…QQQQ), 394-419 (QQQQ…ESMD), 454-476 (MHLQ…QQIQ), and 528-621 (IQQQ…RRRT). Composition is skewed to low complexity over residues 30–94 (QQQQ…NNNN) and 130–147 (QQQQ…QHPH). Over residues 148-168 (QQQHPHQQQHPHQQQHPHQQQ) the composition is skewed to basic residues. Over residues 169-180 (HPHQQQIQQQQQ) the composition is skewed to low complexity. Residues 271–282 (GGNSRKNSFDMY) are compositionally biased toward polar residues. Composition is skewed to low complexity over residues 283–322 (NNNN…NNNI) and 340–362 (QHQQ…QQQQ). Composition is skewed to low complexity over residues 457–476 (QQQQ…QQIQ) and 528–549 (IQQQ…TPNN). The span at 550–569 (GSPSSSDGKSPVNSNTAITS) shows a compositional bias: polar residues. A compositionally biased stretch (low complexity) spans 570–588 (NNNNNNNNNNNNNNNNNNN). The segment at 631–656 (CHYCEVTETPEWRRGPDGDHTLCNAC) adopts a GATA-type zinc-finger fold. Residues 661–694 (AKSQKKLAREKELEKQKELEREKERENTRKHSID) adopt a coiled-coil conformation. A compositionally biased stretch (basic and acidic residues) spans 667–693 (LAREKELEKQKELEREKERENTRKHSI). Residues 667-714 (LAREKELEKQKELEREKERENTRKHSIDFMLMNDTSSAPTNSQNPTPN) form a disordered region. Positions 699–714 (NDTSSAPTNSQNPTPN) are enriched in polar residues.

The chain is GATA zinc finger domain-containing protein 10 (gtaJ) from Dictyostelium discoideum (Social amoeba).